A 335-amino-acid chain; its full sequence is Methyltransferase pgmE (335 aa).

This sequence belongs to the methyltransferase superfamily.

The protein operates within pigment biosynthesis. Its pathway is secondary metabolite biosynthesis. In terms of biological role, methyltransferase; part of the gene cluster that mediates the biosynthesis of pleosporalin A, ascomycone A, as well as a third cryptic naphthoquinone derived pigment, all responsible for the coloration of conidia. Essential for the production of pleosporalin A, but not the 2 other final products. The pathway begins with the biosynthesis of the cyclized heptaketide 3-acetonyl-1,6,8-trihydroxy-2-naphthaldehyde by the NR-PKS pgmA. The C-6 hydroxyl group is further methylated by the O-methyltransferase pgmB to yield fusarubinaldehyde which is in turn oxidized by the cytochrome P450 monooxygenase pgmC at C-9. The C-1 hydroxyl group is then methylated spontaneously. Although pgmE, pgmD and pgmH are essential for the production of pleosporalin A, it is not the case for the 2 other final products and it remains difficult to assign a specific function to each enzyme. PgmF and pgmG seem not to be involved in pigment biosynthesis although they were regulated by the cluster-specific transcription factor pgmR. The polypeptide is Methyltransferase pgmE (Aspergillus terreus).